A 334-amino-acid polypeptide reads, in one-letter code: Beta-glucanase (334 aa).

Residues 1 to 27 form the signal peptide; it reads MKNRVISLLMASLLLVLSVIVAPFYKA. The region spanning 28-248 is the GH16 domain; it reads EAATVVNTPF…YVKYYPNGVP (221 aa). The Nucleophile role is filled by Glu-136. Residue Glu-140 is the Proton donor of the active site. Residues 267 to 334 form the Dockerin domain; that stretch reads NLPLKGDVNG…RYLIRAIPSL (68 aa).

Belongs to the glycosyl hydrolase 16 family. As to quaternary structure, may form part of a multienzyme complex (cellulosome).

The enzyme catalyses Hydrolysis of (1-&gt;4)-beta-D-glucosidic linkages in beta-D-glucans containing (1-&gt;3)- and (1-&gt;4)-bonds.. In Acetivibrio thermocellus (strain ATCC 27405 / DSM 1237 / JCM 9322 / NBRC 103400 / NCIMB 10682 / NRRL B-4536 / VPI 7372) (Clostridium thermocellum), this protein is Beta-glucanase (licB).